The primary structure comprises 665 residues: Intraflagellar transport protein 70A (665 aa).

TPR repeat units lie at residues 11-44 (DGEFTALVYRLIRDARYAEAVQLLGRELQRSPRS), 45-78 (RAGLSLLGYCYYRLQEFALAAECYEQLGQLHPEL), 154-187 (TDGQVNLGCLLYKEGQYEAACSKFSATLQASGYQ), 189-221 (DLSYNLALAYYSSRQYASALKHIAEIIERGIRQ), 393-424 (LTKQVQEARHNRDDEAIKKAVNEYDETMEKYI), 425-457 (PVLMAQAKIYWNLENYPMVEKVFRKSVEFCNDH), and 459-492 (VWKLNVAHVLFMQENKYKEAIGFYEPIVKKHYDN). A coiled-coil region spans residues 508-535 (YIMTSQNEEAEELMRKIEKEEEQLSYDD). The TPR 8 repeat unit spans residues 544–577 (CIVNLVIGTLYCAKGNYEFGISRVIKSLEPYNKK).

This sequence belongs to the TTC30/dfy-1/fleer family.

The protein localises to the cell projection. It localises to the cilium. Functionally, required for polyglutamylation of axonemal tubulin. Plays a role in anterograde intraflagellar transport (IFT), the process by which cilia precursors are transported from the base of the cilium to the site of their incorporation at the tip. This chain is Intraflagellar transport protein 70A, found in Homo sapiens (Human).